We begin with the raw amino-acid sequence, 436 residues long: GTPase Der (436 aa).

2 consecutive EngA-type G domains span residues 4–167 (PTVA…PVEE) and 175–351 (IRFS…ESQN). GTP is bound by residues 10 to 17 (GRPNVGKS), 57 to 61 (DTGGI), 119 to 122 (NKVD), 181 to 188 (GRPNVGKS), 229 to 233 (DTAGM), and 294 to 297 (NKWD). The KH-like domain occupies 352–436 (KRIPSAVLND…PIHLIARKRK (85 aa)).

Belongs to the TRAFAC class TrmE-Era-EngA-EngB-Septin-like GTPase superfamily. EngA (Der) GTPase family. In terms of assembly, associates with the 50S ribosomal subunit.

In terms of biological role, GTPase that plays an essential role in the late steps of ribosome biogenesis. The polypeptide is GTPase Der (Streptococcus pyogenes serotype M3 (strain ATCC BAA-595 / MGAS315)).